The primary structure comprises 100 residues: NADH-quinone oxidoreductase subunit K 1 (100 aa).

Helical transmembrane passes span 3–23, 28–48, and 60–80; these read IIKAYIILSIALFLIGLLGVI, LITVLVSTELMLNGINLALVA, and IFAFFVLTVAAAEVAVGLGLI.

The protein belongs to the complex I subunit 4L family. NDH-1 is composed of 14 different subunits. Subunits NuoA, H, J, K, L, M, N constitute the membrane sector of the complex.

The protein resides in the cell inner membrane. It catalyses the reaction a quinone + NADH + 5 H(+)(in) = a quinol + NAD(+) + 4 H(+)(out). In terms of biological role, NDH-1 shuttles electrons from NADH, via FMN and iron-sulfur (Fe-S) centers, to quinones in the respiratory chain. The immediate electron acceptor for the enzyme in this species is believed to be ubiquinone. Couples the redox reaction to proton translocation (for every two electrons transferred, four hydrogen ions are translocated across the cytoplasmic membrane), and thus conserves the redox energy in a proton gradient. This Aquifex aeolicus (strain VF5) protein is NADH-quinone oxidoreductase subunit K 1.